Reading from the N-terminus, the 507-residue chain is Probable cytosol aminopeptidase (507 aa).

Residues Lys275 and Asp280 each coordinate Mn(2+). The active site involves Lys287. Positions 298, 357, and 359 each coordinate Mn(2+). Arg361 is a catalytic residue.

This sequence belongs to the peptidase M17 family. It depends on Mn(2+) as a cofactor.

The protein resides in the cytoplasm. The enzyme catalyses Release of an N-terminal amino acid, Xaa-|-Yaa-, in which Xaa is preferably Leu, but may be other amino acids including Pro although not Arg or Lys, and Yaa may be Pro. Amino acid amides and methyl esters are also readily hydrolyzed, but rates on arylamides are exceedingly low.. The catalysed reaction is Release of an N-terminal amino acid, preferentially leucine, but not glutamic or aspartic acids.. Its function is as follows. Presumably involved in the processing and regular turnover of intracellular proteins. Catalyzes the removal of unsubstituted N-terminal amino acids from various peptides. The protein is Probable cytosol aminopeptidase of Rhodopirellula baltica (strain DSM 10527 / NCIMB 13988 / SH1).